Here is a 166-residue protein sequence, read N- to C-terminus: Ribosome maturation factor RimM (166 aa).

The PRC barrel domain occupies 90–165; sequence NDNDAFSIFY…IITLKNIEGL (76 aa).

The protein belongs to the RimM family. As to quaternary structure, binds ribosomal protein uS19.

The protein resides in the cytoplasm. An accessory protein needed during the final step in the assembly of 30S ribosomal subunit, possibly for assembly of the head region. Essential for efficient processing of 16S rRNA. May be needed both before and after RbfA during the maturation of 16S rRNA. It has affinity for free ribosomal 30S subunits but not for 70S ribosomes. The chain is Ribosome maturation factor RimM from Mesoplasma florum (strain ATCC 33453 / NBRC 100688 / NCTC 11704 / L1) (Acholeplasma florum).